The primary structure comprises 60 residues: Ribosome biogenesis protein Nop10 (60 aa).

Belongs to the NOP10 family.

Involved in ribosome biogenesis; more specifically in 18S rRNA pseudouridylation and in cleavage of pre-rRNA. The sequence is that of Ribosome biogenesis protein Nop10 from Haloquadratum walsbyi (strain DSM 16790 / HBSQ001).